A 292-amino-acid chain; its full sequence is RNA 5'-monophosphate methyltransferase (292 aa).

Residues 1 to 20 (MAVPTELHGGSVKETAAEKE) form a disordered region. Residues Arg46, Asn76, Asp110, 135 to 136 (DF), and Met164 contribute to the S-adenosyl-L-methionine site. The Bin3-type SAM domain occupies 53-274 (ELLRQLFPES…KQTIETHPIP (222 aa)).

Belongs to the methyltransferase superfamily. As to quaternary structure, interacts with DICER1; the interaction may be mediated by RNA.

The protein localises to the cytoplasm. The enzyme catalyses a 5'-end 5'-phospho-ribonucleoside-RNA + S-adenosyl-L-methionine = a 5'-end (5'-methylphospho)-ribonucleoside-RNA + S-adenosyl-L-homocysteine. It carries out the reaction a 5'-end 5'-phospho-ribonucleoside-RNA + 2 S-adenosyl-L-methionine = a 5'-end (5'-bismethylphospho)-ribonucleoside-RNA + 2 S-adenosyl-L-homocysteine. In terms of biological role, O-methyltransferase that specifically monomethylates 5'-monophosphate of cytoplasmic histidyl tRNA (tRNA(His)), acting as a capping enzyme by protecting tRNA(His) from cleavage by DICER1. Also able, with less efficiently, to methylate the 5' monophosphate of a subset of pre-miRNAs, acting as a negative regulator of miRNA processing. The 5' monophosphate of pre-miRNAs is recognized by DICER1 and is required for pre-miRNAs processing: methylation at this position reduces the processing of pre-miRNAs by DICER1. Was also reported to mediate dimethylation of pre-miR-145; however dimethylation cannot be reproduced by another group which observes a monomethylation of pre-miR-145. This chain is RNA 5'-monophosphate methyltransferase (BCDIN3D), found in Pongo abelii (Sumatran orangutan).